Consider the following 481-residue polypeptide: Proline--tRNA ligase (481 aa).

Belongs to the class-II aminoacyl-tRNA synthetase family. ProS type 3 subfamily. As to quaternary structure, homodimer.

It is found in the cytoplasm. It catalyses the reaction tRNA(Pro) + L-proline + ATP = L-prolyl-tRNA(Pro) + AMP + diphosphate. In terms of biological role, catalyzes the attachment of proline to tRNA(Pro) in a two-step reaction: proline is first activated by ATP to form Pro-AMP and then transferred to the acceptor end of tRNA(Pro). This Thermococcus kodakarensis (strain ATCC BAA-918 / JCM 12380 / KOD1) (Pyrococcus kodakaraensis (strain KOD1)) protein is Proline--tRNA ligase.